We begin with the raw amino-acid sequence, 910 residues long: Disease resistance protein RPH8A (910 aa).

Residues 15–57 (DLLSRESERLQGIDEQLDGLKRQLRSLQSLLKDADAKKHGSDR) are a coiled coil. The 314-residue stretch at 146–459 (RQRVQREIRQ…AEGIYDGSTI (314 aa)) folds into the NB-ARC domain. 192 to 199 (GMGGIGKT) provides a ligand contact to ATP.

The protein belongs to the disease resistance NB-LRR family. RPP8/HRT subfamily.

Disease resistance protein. Resistance proteins guard the plant against pathogens that contain an appropriate avirulence protein via an indirect interaction with this avirulence protein. That triggers a defense system including the hypersensitive response, which restricts the pathogen growth. In contrast to RPP8, it does not specifically recognize the Emco5 avirulence protein from Hyaloperonospora parasitica. The protein is Disease resistance protein RPH8A (RPH8A) of Arabidopsis thaliana (Mouse-ear cress).